A 344-amino-acid chain; its full sequence is UDP-N-acetylglucosamine--N-acetylmuramyl-(pentapeptide) pyrophosphoryl-undecaprenol N-acetylglucosamine transferase (344 aa).

Residues Thr9–Gly11, Asn118, Arg157, Ser188, and Gln282 each bind UDP-N-acetyl-alpha-D-glucosamine.

The protein belongs to the glycosyltransferase 28 family. MurG subfamily.

The protein resides in the cell inner membrane. It carries out the reaction di-trans,octa-cis-undecaprenyl diphospho-N-acetyl-alpha-D-muramoyl-L-alanyl-D-glutamyl-meso-2,6-diaminopimeloyl-D-alanyl-D-alanine + UDP-N-acetyl-alpha-D-glucosamine = di-trans,octa-cis-undecaprenyl diphospho-[N-acetyl-alpha-D-glucosaminyl-(1-&gt;4)]-N-acetyl-alpha-D-muramoyl-L-alanyl-D-glutamyl-meso-2,6-diaminopimeloyl-D-alanyl-D-alanine + UDP + H(+). It participates in cell wall biogenesis; peptidoglycan biosynthesis. In terms of biological role, cell wall formation. Catalyzes the transfer of a GlcNAc subunit on undecaprenyl-pyrophosphoryl-MurNAc-pentapeptide (lipid intermediate I) to form undecaprenyl-pyrophosphoryl-MurNAc-(pentapeptide)GlcNAc (lipid intermediate II). The protein is UDP-N-acetylglucosamine--N-acetylmuramyl-(pentapeptide) pyrophosphoryl-undecaprenol N-acetylglucosamine transferase of Aquifex aeolicus (strain VF5).